We begin with the raw amino-acid sequence, 202 residues long: Glycerol-3-phosphate acyltransferase (202 aa).

4 helical membrane passes run 2–22, 80–100, 119–139, and 158–178; these read ANLL…AVVV, LNET…LFPV, AIDP…AFFF, and VLMN…VLLI.

Belongs to the PlsY family. As to quaternary structure, probably interacts with PlsX.

It is found in the cell inner membrane. It carries out the reaction an acyl phosphate + sn-glycerol 3-phosphate = a 1-acyl-sn-glycero-3-phosphate + phosphate. It functions in the pathway lipid metabolism; phospholipid metabolism. In terms of biological role, catalyzes the transfer of an acyl group from acyl-phosphate (acyl-PO(4)) to glycerol-3-phosphate (G3P) to form lysophosphatidic acid (LPA). This enzyme utilizes acyl-phosphate as fatty acyl donor, but not acyl-CoA or acyl-ACP. The sequence is that of Glycerol-3-phosphate acyltransferase from Cupriavidus necator (strain ATCC 17699 / DSM 428 / KCTC 22496 / NCIMB 10442 / H16 / Stanier 337) (Ralstonia eutropha).